Consider the following 51-residue polypeptide: Defensin-like protein 2A (51 aa).

Pyrrolidone carboxylic acid is present on Gln1. Cystine bridges form between Cys4–Cys51, Cys15–Cys36, Cys21–Cys45, and Cys25–Cys47. The residue at position 8 (Ser8) is a Phosphoserine; by CPK.

As to quaternary structure, forms oligomers in its native state.

Its function is as follows. Possesses antifungal activity sensitive to inorganic cations. This is Defensin-like protein 2A from Sinapis alba (White mustard).